The following is a 213-amino-acid chain: Eukaryotic translation initiation factor 4E (213 aa).

2 positions are modified to phosphoserine; by CK2: Ser-2 and Ser-15. Residue Thr-22 is modified to Phosphothreonine. A phosphoserine mark is found at Ser-28 and Ser-30. Residue Lys-114 forms a Glycyl lysine isopeptide (Lys-Gly) (interchain with G-Cter in ubiquitin) linkage.

The protein belongs to the eukaryotic initiation factor 4E family. As to quaternary structure, component of the eIF4F complex, which composition varies with external and internal environmental conditions. It is composed of at least eIF4A (TIF1/TIF2), eIF4E (TIF45) and eIF4G (TIF4631 or TIF4632). Interacts with PAT1 in a RNA-dependent manner. eIF4E is also known to interact with other partners.

The protein resides in the cytoplasm. It is found in the nucleus. Functionally, recognizes and binds the 7-methylguanosine (m7G)-containing mRNA cap during an early step in the initiation of protein synthesis and facilitates ribosome binding by inducing the unwinding of the mRNAs secondary structures. In Saccharomyces cerevisiae (strain ATCC 204508 / S288c) (Baker's yeast), this protein is Eukaryotic translation initiation factor 4E (CDC33).